We begin with the raw amino-acid sequence, 113 residues long: FK506-binding protein 1B (113 aa).

A PPIase FKBP-type domain is found at Gly-19–Gln-113.

It belongs to the FKBP-type PPIase family. FKBP1 subfamily.

The protein localises to the cytoplasm. The enzyme catalyses [protein]-peptidylproline (omega=180) = [protein]-peptidylproline (omega=0). With respect to regulation, inhibited by both FK506 and rapamycin. Its function is as follows. PPIases accelerate the folding of proteins. It catalyzes the cis-trans isomerization of proline imidic peptide bonds in oligopeptides. The chain is FK506-binding protein 1B (fkr-3) from Neurospora crassa (strain ATCC 24698 / 74-OR23-1A / CBS 708.71 / DSM 1257 / FGSC 987).